Reading from the N-terminus, the 76-residue chain is Bomanin Tailed 2 (76 aa).

A signal peptide spans 1–22 (MKALQVAGTLMLLFCLLAAVNA). Positions 23 to 24 (TP) are cleaved as a propeptide — removed by a dipeptidylpeptidase. Residues Cys33 and Cys36 are joined by a disulfide bond.

Belongs to the bomanin family.

It localises to the secreted. Functionally, secreted immune-induced peptide induced by Toll signaling. Has a role in resistance to bacterial and fungal infections. The strength of antimicrobial activity appears to correlate with the overall level of expression. This chain is Bomanin Tailed 2, found in Drosophila melanogaster (Fruit fly).